The chain runs to 105 residues: Serine protease inhibitor Kazal-type 6 (105 aa).

Positions 1 to 23 (MKVAGVFLLLSLALLCFFSGAFS) are cleaved as a signal peptide. The residue at position 24 (glutamine 24) is a Pyrrolidone carboxylic acid. Residues 49 to 105 (RLFQINCGEFRDPKVFCTRESDPLCGSDGQTYGNKCAFCKALEKSSGKINLKHRGKC) form the Kazal-like domain. Disulfide bonds link cysteine 55-cysteine 87, cysteine 65-cysteine 84, and cysteine 73-cysteine 105.

As to expression, expressed in the upper epidermis and in skin appendages.

Its subcellular location is the secreted. Serine protease inhibitor selective for kallikreins. Efficiently inhibits KLK5 and human KLK2, KLK4, KLK5, KLK6, KLK7, KLK12, KLK13 and KLK14. Doesn't inhibit human KLK1 and KLK8. This Mus musculus (Mouse) protein is Serine protease inhibitor Kazal-type 6 (Spink6).